A 100-amino-acid polypeptide reads, in one-letter code: Urease subunit gamma (100 aa).

This sequence belongs to the urease gamma subunit family. As to quaternary structure, heterotrimer of UreA (gamma), UreB (beta) and UreC (alpha) subunits. Three heterotrimers associate to form the active enzyme.

It localises to the cytoplasm. It catalyses the reaction urea + 2 H2O + H(+) = hydrogencarbonate + 2 NH4(+). It participates in nitrogen metabolism; urea degradation; CO(2) and NH(3) from urea (urease route): step 1/1. This Yersinia rohdei protein is Urease subunit gamma.